A 170-amino-acid polypeptide reads, in one-letter code: MLPIITYPHPLLKKRSEPVTLFDEELRQFLDEMYITMLAKNGVGLAAVQVGNPIRALIVNIPDEEGNQERENLLEIINPEFLSKEGEIQFNEGCLSVPEFYEDVTRFDRVRLTYQDRYGERHEIEAEGYLAVALQHEIDHLNGILFIDKLSLIKRKKFEKELKKRQRASL.

Fe cation contacts are provided by Cys-94 and His-136. Glu-137 is an active-site residue. Residue His-140 participates in Fe cation binding.

This sequence belongs to the polypeptide deformylase family. Fe(2+) is required as a cofactor.

The enzyme catalyses N-terminal N-formyl-L-methionyl-[peptide] + H2O = N-terminal L-methionyl-[peptide] + formate. Functionally, removes the formyl group from the N-terminal Met of newly synthesized proteins. Requires at least a dipeptide for an efficient rate of reaction. N-terminal L-methionine is a prerequisite for activity but the enzyme has broad specificity at other positions. This is Peptide deformylase from Wolinella succinogenes (strain ATCC 29543 / DSM 1740 / CCUG 13145 / JCM 31913 / LMG 7466 / NCTC 11488 / FDC 602W) (Vibrio succinogenes).